Reading from the N-terminus, the 203-residue chain is MELLREFLRNYGERFKEELENLVKKYVQGEEDVVLLKMDERCLILPFLNVGDFFYMKARELTEPVKLEVLQKRDSEVLARAISYEETYIEKRQHVRVQPDKPIPVYIKEKDTVGSILDISVGGIGVFLKEKVVEPEEVVTLEFELEGEEIKTKGECRYTIPYRAGYRAGFKFVDLSTRYENIIGRYVMKRQMEILKELKESMI.

Positions 90-188 (EKRQHVRVQP…YENIIGRYVM (99 aa)) constitute a PilZ domain.

It to A.aeolicus aq_820 and aq_1583.

This is an uncharacterized protein from Aquifex aeolicus (strain VF5).